A 270-amino-acid chain; its full sequence is Putative ABC transporter ATP-binding protein MG304 (270 aa).

The 232-residue stretch at 1-232 (MLQVKNLSFK…LDLFHNHHFN (232 aa)) folds into the ABC transporter domain. 36–43 (GHNGSGKS) is an ATP binding site.

It belongs to the ABC transporter superfamily.

The polypeptide is Putative ABC transporter ATP-binding protein MG304 (Mycoplasma genitalium (strain ATCC 33530 / DSM 19775 / NCTC 10195 / G37) (Mycoplasmoides genitalium)).